The chain runs to 88 residues: HssA/B-like protein 17 (88 aa).

This sequence belongs to the hssA/B family.

This Dictyostelium discoideum (Social amoeba) protein is HssA/B-like protein 17 (hssl17).